Consider the following 817-residue polypeptide: Disks large homolog 3 (817 aa).

N-acetylmethionine occurs at positions 1 and 2. The interval 33–101 (WQVPDPYGPG…GKSTPKLNGS (69 aa)) is disordered. Positions 40-53 (GPGGGNGASAGYGG) are enriched in gly residues. A compositionally biased stretch (polar residues) spans 57–69 (QTLPSQAGATPTP). PDZ domains are found at residues 130–217 (EEIV…VRRR), 226–311 (EVNL…KVAK), and 379–465 (DFTR…VAQY). Residue Ser139 is modified to Phosphoserine. Residues 501-571 (KRSLYVRALF…PSKKRVEKKE (71 aa)) enclose the SH3 domain. Positions 627 to 802 (ARPVIILGPM…IYNKIKQIIE (176 aa)) constitute a Guanylate kinase-like domain. At Tyr673 the chain carries Phosphotyrosine.

Belongs to the MAGUK family. As to quaternary structure, interacts through its PDZ domains with NETO1, GRIN2B and SYNGAP1. Interacts through its guanylate kinase-like domain with DLGAP1, DLGAP2, DLGAP3 and DLGAP4. Interacts with FLTP/C1orf192. Interacts through its PDZ domains with APC. Interacts through its first two PDZ domains with ERBB4. Interacts through its third PDZ domain with NLGN1, and probably with NLGN2 and NLGN3. Interacts with FRMPD4 (via C-terminus). Interacts with LRFN1, LRFN2 and LRFN4. Interacts with DGKI (via PDZ-binding motif).

Required for learning most likely through its role in synaptic plasticity following NMDA receptor signaling. This chain is Disks large homolog 3 (DLG3), found in Homo sapiens (Human).